A 74-amino-acid chain; its full sequence is Mitochondrial import receptor subunit TOM6 homolog (74 aa).

Residues 1–20 (MASSGVTVSAAGSASEASEV) are compositionally biased toward low complexity. Residues 1 to 21 (MASSGVTVSAAGSASEASEVP) form a disordered region. Ala2 is subject to N-acetylalanine.

Belongs to the Tom6 family. As to quaternary structure, forms part of the preprotein translocase complex of the outer mitochondrial membrane (TOM complex) which consists of at least 7 different proteins (TOMM5, TOMM6, TOMM7, TOMM20, TOMM22, TOMM40 and TOMM70).

The protein resides in the mitochondrion outer membrane. This Mus musculus (Mouse) protein is Mitochondrial import receptor subunit TOM6 homolog (Tomm6).